Here is a 317-residue protein sequence, read N- to C-terminus: MGYDVTRFQGDVDEDLICPICSGVLEEPVQAPHCEHAFCNACITQWFSQQQTCPVDRSVVTVAHLRPVPRIMRNMLSKLQIACDNAVFGCSAVVRLDNLMSHLSDCEHNPKRPVTCEQGCGLEMPKDELPNHNCIKHLRSVVQQQQSRIAELEKTSAEHKHQLAEQKRDIQLLKAYMRAIRSVNPNLQNLEETIEYNEILEWVNSLQPARVTRWGGMISTPDAVLQAVIKRSLVESGCPASIVNELIENAHERSWPQGLATLETRQMNRRYYENYVAKRIPGKQAVVVMACENQHMGDDMVQEPGLVMIFAHGVEEI.

Residues 18–57 (CPICSGVLEEPVQAPHCEHAFCNACITQWFSQQQTCPVDR) form an RING-type; degenerate zinc finger. The SIAH-type; degenerate zinc finger occupies 78–138 (KLQIACDNAV…LPNHNCIKHL (61 aa)).

As to quaternary structure, interacts with USP8, ERBB3, PRKN and BIRC6. Interacts with CSF2RB, EPOR, IL3RA, MYD88 and TBK1. Interacts with Clec16a. Autoubiquitinated. Autoubiquitination leads to proteasomal degradation. Deubiquitinated by USP8 to get stabilized which induces apoptosis.

It catalyses the reaction S-ubiquitinyl-[E2 ubiquitin-conjugating enzyme]-L-cysteine + [acceptor protein]-L-lysine = [E2 ubiquitin-conjugating enzyme]-L-cysteine + N(6)-ubiquitinyl-[acceptor protein]-L-lysine.. It functions in the pathway protein modification; protein ubiquitination. Functionally, acts as E3 ubiquitin-protein ligase and regulates the degradation of target proteins. Polyubiquitinates MYD88. Negatively regulates MYD88-dependent production of pro-inflammatory cytokines. Can promote TRIF-dependent production of type I interferon and inhibits infection with vesicular stomatitis virus. Also promotes activation of TBK1 and IRF3. Involved in the ubiquitination of erythropoietin (EPO) and interleukin-3 (IL-3) receptors. Thus, through maintaining basal levels of cytokine receptors, RNF41 is involved in the control of hematopoietic progenitor cell differentiation into myeloerythroid lineages. Contributes to the maintenance of steady-state ERBB3 levels by mediating its growth factor-independent degradation. Involved in the degradation of the inhibitor of apoptosis BIRC6 and thus is an important regulator of cell death by promoting apoptosis. Also acts as a PRKN modifier that accelerates its degradation, resulting in a reduction of PRKN activity, influencing the balance of intracellular redox state. The RNF41-PRKN pathway regulates autophagosome-lysosome fusion during late mitophagy. Mitophagy is a selective form of autophagy necessary for mitochondrial quality control. This chain is E3 ubiquitin-protein ligase NRDP1 (Rnf41), found in Mus musculus (Mouse).